Reading from the N-terminus, the 178-residue chain is ATP-dependent protease subunit HslV (178 aa).

Threonine 7 is an active-site residue. Positions 162, 165, and 168 each coordinate Na(+).

This sequence belongs to the peptidase T1B family. HslV subfamily. In terms of assembly, a double ring-shaped homohexamer of HslV is capped on each side by a ring-shaped HslU homohexamer. The assembly of the HslU/HslV complex is dependent on binding of ATP.

The protein localises to the cytoplasm. It carries out the reaction ATP-dependent cleavage of peptide bonds with broad specificity.. Allosterically activated by HslU binding. Protease subunit of a proteasome-like degradation complex believed to be a general protein degrading machinery. The chain is ATP-dependent protease subunit HslV from Azoarcus sp. (strain BH72).